The following is a 425-amino-acid chain: UDP-N-acetylglucosamine 1-carboxyvinyltransferase (425 aa).

22–23 (KN) is a binding site for phosphoenolpyruvate. Arg-93 contacts UDP-N-acetyl-alpha-D-glucosamine. The active-site Proton donor is Cys-117. Cys-117 carries the 2-(S-cysteinyl)pyruvic acid O-phosphothioketal modification. Residues 122-126 (RPVDL), 162-165 (KVSV), Asp-307, and Ile-329 contribute to the UDP-N-acetyl-alpha-D-glucosamine site.

The protein belongs to the EPSP synthase family. MurA subfamily.

The protein localises to the cytoplasm. It carries out the reaction phosphoenolpyruvate + UDP-N-acetyl-alpha-D-glucosamine = UDP-N-acetyl-3-O-(1-carboxyvinyl)-alpha-D-glucosamine + phosphate. The protein operates within cell wall biogenesis; peptidoglycan biosynthesis. In terms of biological role, cell wall formation. Adds enolpyruvyl to UDP-N-acetylglucosamine. The protein is UDP-N-acetylglucosamine 1-carboxyvinyltransferase of Pasteurella multocida (strain Pm70).